Reading from the N-terminus, the 513-residue chain is Serine/threonine-protein kinase PBL27 (513 aa).

Residues 1–61 (MSGCLPCFGS…KKELTAPKEG (61 aa)) are disordered. 2 S-palmitoyl cysteine lipidation sites follow: Cys-4 and Cys-7. Basic and acidic residues-rich tracts occupy residues 15–27 (AASK…ELSA) and 38–57 (ISLD…ELTA). One can recognise a Protein kinase domain in the interval 83–360 (FRPECLLGEG…GDVVTALTYL (278 aa)). Residues 89 to 97 (LGEGGFGRV) and Lys-112 contribute to the ATP site. Asp-210 (proton acceptor) is an active-site residue. Ser-244 is subject to Phosphoserine; by CERK1. Residues Thr-245 and Thr-250 each carry the phosphothreonine; by CERK1 modification. Residues 365-378 (FDPNAPSGQNSRSG) are compositionally biased toward polar residues. Residues 365-513 (FDPNAPSGQN…GPGSFDSTND (149 aa)) are disordered. Phosphoserine is present on residues Ser-392 and Ser-401. Residues 417–428 (NSPDYRRRDMVR) are compositionally biased toward basic and acidic residues. The segment covering 434–446 (SEGGSETGGGSGR) has biased composition (gly residues). Residues 456–473 (QESQRGSPASVGRSSRGT) show a composition bias toward polar residues. The span at 475-486 (RNRDLDRERAVA) shows a compositional bias: basic and acidic residues. Residues 504-513 (GPGSFDSTND) are compositionally biased toward polar residues.

This sequence belongs to the protein kinase superfamily. Ser/Thr protein kinase family. Interacts with CERK1 (preferentially unphosphorylated) at the plasma membrane. Binds to MAPKKK5 at the plasma membrane; disassociation is induced by chitin perception by the CERK1 complex. Also associates with MAPKKK3. In terms of processing, phosphorylated by CERK1 upon elicitation by chitin. Post-translationally, palmitoylation at Cys-4 and Cys-7 are required for plasma membrane location.

The protein localises to the cell membrane. The enzyme catalyses L-seryl-[protein] + ATP = O-phospho-L-seryl-[protein] + ADP + H(+). It carries out the reaction L-threonyl-[protein] + ATP = O-phospho-L-threonyl-[protein] + ADP + H(+). Functionally, receptor-like cytoplasmic kinase involved in the transduction of signal between the host cell surface chitin receptor complex CERK1-LYK5 and the intracellular MAPKKK5-dependent mitogen-activated protein kinase (MAPK) cascade that leads to chitin-induced immunity. Phosphorylates and activates MAPKKK5 when phosphorylated by CERK1 after elicitation by chitin. In Arabidopsis thaliana (Mouse-ear cress), this protein is Serine/threonine-protein kinase PBL27.